A 458-amino-acid polypeptide reads, in one-letter code: Methylenetetrahydrofolate--tRNA-(uracil-5-)-methyltransferase TrmFO (458 aa).

11-16 (GGGMAG) contacts FAD.

This sequence belongs to the MnmG family. TrmFO subfamily. FAD is required as a cofactor.

The protein localises to the cytoplasm. The enzyme catalyses uridine(54) in tRNA + (6R)-5,10-methylene-5,6,7,8-tetrahydrofolate + NADH + H(+) = 5-methyluridine(54) in tRNA + (6S)-5,6,7,8-tetrahydrofolate + NAD(+). It catalyses the reaction uridine(54) in tRNA + (6R)-5,10-methylene-5,6,7,8-tetrahydrofolate + NADPH + H(+) = 5-methyluridine(54) in tRNA + (6S)-5,6,7,8-tetrahydrofolate + NADP(+). Catalyzes the folate-dependent formation of 5-methyl-uridine at position 54 (M-5-U54) in all tRNAs. This is Methylenetetrahydrofolate--tRNA-(uracil-5-)-methyltransferase TrmFO from Jannaschia sp. (strain CCS1).